Reading from the N-terminus, the 529-residue chain is Beta-galactoside alpha-2,6-sialyltransferase 2 (529 aa).

Over 1 to 11 (MKPHLKQWRQR) the chain is Cytoplasmic. A helical; Signal-anchor for type II membrane protein membrane pass occupies residues 12–32 (MLFGLFAGGLLFLLIFIYFTD). Residues 33 to 529 (SNPAEPVPSS…PAPSPVIPHS (497 aa)) are Lumenal-facing. Residues 142–186 (SHSQGTLGFPSPGEPGPREGAFPAAQVQRRRVKKRHRRQRRSHVL) are disordered. Over residues 169-183 (QRRRVKKRHRRQRRS) the composition is skewed to basic residues. The N-linked (GlcNAc...) asparagine glycan is linked to N211. Disulfide bonds link C253–C519, C296–C448, and C466–C477.

Belongs to the glycosyltransferase 29 family.

It localises to the golgi apparatus. The protein resides in the golgi stack membrane. The catalysed reaction is a beta-D-galactoside + CMP-N-acetyl-beta-neuraminate = an N-acetyl-alpha-neuraminyl-(2-&gt;6)-beta-D-galactosyl derivative + CMP + H(+). In terms of biological role, transfers sialic acid from the donor of substrate CMP-sialic acid to galactose containing acceptor substrates. Has alpha-2,6-sialyltransferase activity toward oligosaccharides that have the Gal-beta-1,4-GlcNAc sequence at the non-reducing end of their carbohydrate groups, but it has weak or no activities toward glycoproteins and glycolipids. The chain is Beta-galactoside alpha-2,6-sialyltransferase 2 (ST6GAL2) from Pan troglodytes (Chimpanzee).